Here is a 132-residue protein sequence, read N- to C-terminus: Small ribosomal subunit protein uS19 (132 aa).

It belongs to the universal ribosomal protein uS19 family.

Its function is as follows. Protein S19 forms a complex with S13 that binds strongly to the 16S ribosomal RNA. The protein is Small ribosomal subunit protein uS19 (rps19) of Pyrococcus horikoshii (strain ATCC 700860 / DSM 12428 / JCM 9974 / NBRC 100139 / OT-3).